Reading from the N-terminus, the 204-residue chain is Large ribosomal subunit protein bL25 (204 aa).

This sequence belongs to the bacterial ribosomal protein bL25 family. CTC subfamily. In terms of assembly, part of the 50S ribosomal subunit; part of the 5S rRNA/L5/L18/L25 subcomplex. Contacts the 5S rRNA. Binds to the 5S rRNA independently of L5 and L18.

This is one of the proteins that binds to the 5S RNA in the ribosome where it forms part of the central protuberance. This chain is Large ribosomal subunit protein bL25, found in Bordetella bronchiseptica (strain ATCC BAA-588 / NCTC 13252 / RB50) (Alcaligenes bronchisepticus).